The sequence spans 89 residues: Small ribosomal subunit protein uS15 (89 aa).

It belongs to the universal ribosomal protein uS15 family. As to quaternary structure, part of the 30S ribosomal subunit. Forms a bridge to the 50S subunit in the 70S ribosome, contacting the 23S rRNA.

Its function is as follows. One of the primary rRNA binding proteins, it binds directly to 16S rRNA where it helps nucleate assembly of the platform of the 30S subunit by binding and bridging several RNA helices of the 16S rRNA. Functionally, forms an intersubunit bridge (bridge B4) with the 23S rRNA of the 50S subunit in the ribosome. In Shewanella frigidimarina (strain NCIMB 400), this protein is Small ribosomal subunit protein uS15.